A 246-amino-acid polypeptide reads, in one-letter code: Phosducin (246 aa).

The segment covering 1–14 (MEEAKSQSLEEDFE) has biased composition (acidic residues). Residues 1 to 70 (MEEAKSQSLE…GKDSKERVSR (70 aa)) form a disordered region. Residues 1–244 (MEEAKSQSLE…LEHTKIEEED (244 aa)) enclose the Phosducin domain. Basic and acidic residues predominate over residues 60–69 (NGKDSKERVS). At S73 the chain carries Phosphoserine; by PKA. The tract at residues 111-246 (YGFVYELETG…HTKIEEEDVE (136 aa)) is thioredoxin fold.

Belongs to the phosducin family. In terms of assembly, forms a complex with the beta and gamma subunits of the GTP-binding protein, transducin. Interacts with CRX. Light-induced changes in cyclic nucleotide levels modulate the phosphorylation of this protein by cAMP kinase.

Its subcellular location is the cytoplasm. It is found in the cytosol. It localises to the nucleus. The protein localises to the cell projection. The protein resides in the cilium. Its subcellular location is the photoreceptor outer segment. It is found in the photoreceptor inner segment. In terms of biological role, may participate in the regulation of visual phototransduction or in the integration of photoreceptor metabolism. Inhibits the transcriptional activation activity of the cone-rod homeobox CRX. This is Phosducin (PDC) from Homo sapiens (Human).